We begin with the raw amino-acid sequence, 223 residues long: Holliday junction branch migration complex subunit RuvA (223 aa).

The domain I stretch occupies residues 1 to 67 (MIGWLKGEKI…EDGSNLFGFI (67 aa)). Positions 68 to 146 (EKSERDLFRK…DFDLNNEFSP (79 aa)) are domain II. The segment at 147–157 (PTKLRPESAED) is flexible linker. Residues 158 to 223 (LNEELLTEIK…FKQALITLNK (66 aa)) are domain III.

The protein belongs to the RuvA family. In terms of assembly, homotetramer. Forms an RuvA(8)-RuvB(12)-Holliday junction (HJ) complex. HJ DNA is sandwiched between 2 RuvA tetramers; dsDNA enters through RuvA and exits via RuvB. An RuvB hexamer assembles on each DNA strand where it exits the tetramer. Each RuvB hexamer is contacted by two RuvA subunits (via domain III) on 2 adjacent RuvB subunits; this complex drives branch migration. In the full resolvosome a probable DNA-RuvA(4)-RuvB(12)-RuvC(2) complex forms which resolves the HJ.

It is found in the cytoplasm. Functionally, the RuvA-RuvB-RuvC complex processes Holliday junction (HJ) DNA during genetic recombination and DNA repair, while the RuvA-RuvB complex plays an important role in the rescue of blocked DNA replication forks via replication fork reversal (RFR). RuvA specifically binds to HJ cruciform DNA, conferring on it an open structure. The RuvB hexamer acts as an ATP-dependent pump, pulling dsDNA into and through the RuvAB complex. HJ branch migration allows RuvC to scan DNA until it finds its consensus sequence, where it cleaves and resolves the cruciform DNA. The polypeptide is Holliday junction branch migration complex subunit RuvA (Prochlorococcus marinus (strain MIT 9211)).